We begin with the raw amino-acid sequence, 600 residues long: Probable translation initiation factor IF-2 (600 aa).

In terms of domain architecture, tr-type G spans 13-228; it reads LRTPIVAVLG…VLMGLAQRYM (216 aa). Residues 22 to 29 form a G1 region; sequence GHVDHGKT. GTP is bound at residue 22–29; that stretch reads GHVDHGKT. A G2 region spans residues 47–51; it reads AITQH. The interval 84 to 87 is G3; sequence DTPG. GTP-binding positions include 84–88 and 138–141; these read DTPGH and NKID. Positions 138–141 are G4; that stretch reads NKID. Positions 140–162 are disordered; it reads IDTTPGWNPNPDAPVQGTYDDQS. The segment at 206 to 208 is G5; the sequence is SAE.

The protein belongs to the TRAFAC class translation factor GTPase superfamily. Classic translation factor GTPase family. IF-2 subfamily.

Its function is as follows. Function in general translation initiation by promoting the binding of the formylmethionine-tRNA to ribosomes. Seems to function along with eIF-2. This Halobacterium salinarum (strain ATCC 700922 / JCM 11081 / NRC-1) (Halobacterium halobium) protein is Probable translation initiation factor IF-2.